The primary structure comprises 159 residues: Probable inactive acireductone dioxygenase 1 (159 aa).

Belongs to the acireductone dioxygenase (ARD) family.

Its subcellular location is the cytoplasm. The protein localises to the nucleus. In terms of biological role, probable inactive acireductone dioxygenase. The protein is Probable inactive acireductone dioxygenase 1 of Caenorhabditis elegans.